The chain runs to 501 residues: GMP synthase [glutamine-hydrolyzing] (501 aa).

The Glutamine amidotransferase type-1 domain occupies 1 to 185 (MVLVVDYGSQ…LFNVCKLEKN (185 aa)). The active-site Nucleophile is Cys-75. Residues His-159 and Glu-161 contribute to the active site. A GMPS ATP-PPase domain is found at 186–376 (WKIGDLVEEK…LGIPDRIINR (191 aa)). 213-219 (SGGVDSS) contributes to the ATP binding site.

As to quaternary structure, homodimer.

The catalysed reaction is XMP + L-glutamine + ATP + H2O = GMP + L-glutamate + AMP + diphosphate + 2 H(+). It functions in the pathway purine metabolism; GMP biosynthesis; GMP from XMP (L-Gln route): step 1/1. Catalyzes the synthesis of GMP from XMP. This is GMP synthase [glutamine-hydrolyzing] from Thermotoga petrophila (strain ATCC BAA-488 / DSM 13995 / JCM 10881 / RKU-1).